Consider the following 536-residue polypeptide: Cytochrome P450 monooxygenase phqM (536 aa).

Residue Cys464 participates in heme binding.

It belongs to the cytochrome P450 family. Heme serves as cofactor.

It participates in alkaloid biosynthesis. Its function is as follows. Cytochrome P450 monooxygenase; part of the gene cluster that mediates the biosynthesis of paraherquamide, a fungal indole alkaloid that belongs to a family of natural products containing a characteristic bicyclo[2.2.2]diazaoctane core. The first steps in the biosynthesis of paraherquamide is the production of the beta-methyl-proline precursor from L-isoleucine. They require oxidation of a terminally hydroxylated L-isoleucine to the corresponding aldehyde by enzymes which have still to be identified. Spontaneous cyclization and dehydration would yield the 4-methyl pyrolline-5-carboxylic acid, which is then reduced by the pyrroline-5-carboxylate reductase phqD leading to the beta-methyl-proline precursor. The next step of paraherquamide biosynthesis involves coupling of beta-methyl-proline and L-tryptophan by the bimodular NRPS phqB, to produce a monooxopiperazine intermediate. The reductase (R) domain of phqB utilizes NADPH for hydride transfer to reduce the thioester bond of the T domain-tethered linear dipeptide to a hemithioaminal intermediate, which spontaneously cleaves the C-S bond to release the aldehyde product. This compound undergoes spontaneous cyclization and dehydration to give a dienamine which is reverse prenylated at C-2 by the reverse prenyltransferase phqJ. The other prenyltransferase present in the cluster, phqI may be a redundant gene in the pathway. During biosynthetic assembly, the key step to produce the polycyclic core is catalyzed by the bifunctional reductase and intramolecular [4+2] Diels-Alderase, phqE, resulting in formation of the [2.2.2] diazaoctane intermediate preparaherquamide. Following formation of preparaherquamide, an indole 2,3-epoxidation-initiated pinacol-like rearrangement is catalyzed by the phqK FAD-dependent monooxygenase. The prenyltransferase phqA, the cytochrome P450 monooxygenase phqL, and the FAD-linked oxidoreductase phqH (or the cytochrome P450 monooxygenase phqM), are proposed to be involved in the formation of the pyran ring. The FAD-dependent monooxygenase phqK is likely responsible for generation of the spiro-oxindole, and the N-methylation is likely mediated by the phqN methyltransferase leading to the isolable natural product paraherquamide F. However, the order of these biosynthetic steps has still to be determined. In late-stage paraherquamide biosynthesis, the third P450 monooxygenase, phqO, is probably responsible for the C-14 hydroxylation, transforming paraherquamide F to paraherquamide G, and paraherquamide E to the final product paraherquamide A. The expansion from the 6-membered ring pyran (in paraherquamides F and G) to the 7-membered dioxepin ring (in paraherquamides A and E) represents a poorly understood but intriguing process that probably involves the 2-oxoglutarate-dependent dioxygenase phqC. Finally, the remaining members of the paraherquamide cluster, including phqI as well as phqM (or phqH), do not have a clearly prescribed role and appear to be redundant. This Penicillium fellutanum protein is Cytochrome P450 monooxygenase phqM.